The primary structure comprises 314 residues: Methionyl-tRNA formyltransferase (314 aa).

(6S)-5,6,7,8-tetrahydrofolate is bound at residue 110–113 (SLLP).

The protein belongs to the Fmt family.

It catalyses the reaction L-methionyl-tRNA(fMet) + (6R)-10-formyltetrahydrofolate = N-formyl-L-methionyl-tRNA(fMet) + (6S)-5,6,7,8-tetrahydrofolate + H(+). In terms of biological role, attaches a formyl group to the free amino group of methionyl-tRNA(fMet). The formyl group appears to play a dual role in the initiator identity of N-formylmethionyl-tRNA by promoting its recognition by IF2 and preventing the misappropriation of this tRNA by the elongation apparatus. The chain is Methionyl-tRNA formyltransferase from Lactobacillus gasseri (strain ATCC 33323 / DSM 20243 / BCRC 14619 / CIP 102991 / JCM 1131 / KCTC 3163 / NCIMB 11718 / NCTC 13722 / AM63).